We begin with the raw amino-acid sequence, 409 residues long: Alpha-1-antitrypsin (409 aa).

A signal peptide spans 1 to 15 (LLLAGLCCLLPGSLA). The tract at residues 18-39 (PQGDAAQKTDTPPHDQNHPTLN) is disordered. N61, N98, N136, and N262 each carry an N-linked (GlcNAc...) asparagine glycan. Positions 364–383 (GAMFLEAIPMSIPPEVKFNK) are RCL. Phosphoserine is present on S374.

It belongs to the serpin family. As to quaternary structure, interacts with CELA2A. Interacts with ERGIC3 and LMAN1/ERGIC53. Interacts with PRSS1/Trypsin. In terms of tissue distribution, plasma.

It is found in the secreted. In terms of biological role, inhibitor of serine proteases. Its primary target is elastase, but it also has a moderate affinity for plasmin and thrombin. Inhibits trypsin, chymotrypsin and plasminogen activator. This Papio anubis (Olive baboon) protein is Alpha-1-antitrypsin (SERPINA1).